Reading from the N-terminus, the 306-residue chain is Ribonuclease BN (306 aa).

The Zn(2+) site is built by His64, His66, Asp68, His69, His141, Asp212, and His270. Catalysis depends on Asp68, which acts as the Proton acceptor.

The protein belongs to the RNase Z family. RNase BN subfamily. As to quaternary structure, homodimer. Zn(2+) is required as a cofactor.

Zinc phosphodiesterase, which has both exoribonuclease and endoribonuclease activities. The chain is Ribonuclease BN from Klebsiella pneumoniae subsp. pneumoniae (strain ATCC 700721 / MGH 78578).